Reading from the N-terminus, the 429-residue chain is Choline kinase A2 (429 aa).

Residues 82 to 88 (KGGMSNM), Arg-111, 152 to 158 (EYIPSRP), and Gln-257 contribute to the ATP site. 84-86 (GMS) contacts substrate. Glu-258 provides a ligand contact to Ca(2+). Residue Asp-301 coordinates ATP. Positions 320 and 323 each coordinate Ca(2+).

This sequence belongs to the choline/ethanolamine kinase family. As to quaternary structure, homodimer. A small proportion exists as higher oligomers. Mg(2+) serves as cofactor.

It catalyses the reaction choline + ATP = phosphocholine + ADP + H(+). It carries out the reaction ethanolamine + ATP = phosphoethanolamine + ADP + H(+). It participates in phospholipid metabolism; phosphatidylcholine biosynthesis; phosphocholine from choline: step 1/1. It functions in the pathway phospholipid metabolism; phosphatidylethanolamine biosynthesis; phosphatidylethanolamine from ethanolamine: step 1/3. Inhibited by Ca(2+). Mild inhibition by high levels of Mg(2+)(&gt;10 mM). Its function is as follows. Catalyzes the first step in phosphatidylcholine biosynthesis. May contribute to phosphatidylethanolamine biosynthesis. Phosphorylates choline and ethanolamine but the activity is much higher with choline. The sequence is that of Choline kinase A2 from Caenorhabditis elegans.